We begin with the raw amino-acid sequence, 522 residues long: 2-isopropylmalate synthase (522 aa).

Residues 5 to 267 form the Pyruvate carboxyltransferase domain; that stretch reads VIIFDTTLRD…ETGINAKEIH (263 aa). Residues Asp-14, His-202, His-204, and Asn-238 each contribute to the Mn(2+) site. The interval 392–522 is regulatory domain; it reads QLQQLVVQSD…MQKNRELGGV (131 aa).

This sequence belongs to the alpha-IPM synthase/homocitrate synthase family. LeuA type 1 subfamily. As to quaternary structure, homodimer. It depends on Mn(2+) as a cofactor.

It localises to the cytoplasm. The enzyme catalyses 3-methyl-2-oxobutanoate + acetyl-CoA + H2O = (2S)-2-isopropylmalate + CoA + H(+). The protein operates within amino-acid biosynthesis; L-leucine biosynthesis; L-leucine from 3-methyl-2-oxobutanoate: step 1/4. Its function is as follows. Catalyzes the condensation of the acetyl group of acetyl-CoA with 3-methyl-2-oxobutanoate (2-ketoisovalerate) to form 3-carboxy-3-hydroxy-4-methylpentanoate (2-isopropylmalate). This Shewanella baltica (strain OS155 / ATCC BAA-1091) protein is 2-isopropylmalate synthase.